A 416-amino-acid chain; its full sequence is MNKQSWLLNLSLLKTHPAFRAVFLARFISIVSLGLLGVAVPVQIQMMTHSTWQVGLSVTLTGGAMFVGLMVGGVLADRYERKKVILLARGTCGIGFIGLCLNALLPEPSLLAIYLLGLWDGFFASLGVTALLAATPALVGRENLMQAGAITMLTVRLGSVISPMIGGLLLATGGVAWNYGLAAAGTFITLLPLLSLPALPPPPQPREHPLKSLLAGFRFLLASPLVGGIALLGGLLTMASAVRVLYPALADNWQMSAAQIGFLYAAIPLGAAIGALTSGKLAHSARPGLLMLLSTLGSFLAIGLFGLMPMWILGVVCLALFGWLSAVSSLLQYTMLQTQTPEAMLGRINGLWTAQNVTGDAIGAALLGGLGAMMTPVASASASGFGLLIIGVLLLLVLVELRRFRQTPPQVTASDG.

The Cytoplasmic segment spans residues 1 to 21 (MNKQSWLLNLSLLKTHPAFRA). The chain crosses the membrane as a helical span at residues 22-42 (VFLARFISIVSLGLLGVAVPV). Residues 43–55 (QIQMMTHSTWQVG) lie on the Periplasmic side of the membrane. A helical transmembrane segment spans residues 56–76 (LSVTLTGGAMFVGLMVGGVLA). Residues 77–83 (DRYERKK) are Cytoplasmic-facing. The helical transmembrane segment at 84–104 (VILLARGTCGIGFIGLCLNAL) threads the bilayer. The Periplasmic segment spans residues 105 to 109 (LPEPS). Residues 110–130 (LLAIYLLGLWDGFFASLGVTA) form a helical membrane-spanning segment. The Cytoplasmic segment spans residues 131 to 156 (LLAATPALVGRENLMQAGAITMLTVR). Residues 157 to 177 (LGSVISPMIGGLLLATGGVAW) form a helical membrane-spanning segment. N178 is a topological domain (periplasmic). A helical transmembrane segment spans residues 179 to 199 (YGLAAAGTFITLLPLLSLPAL). Over 200-218 (PPPPQPREHPLKSLLAGFR) the chain is Cytoplasmic. The chain crosses the membrane as a helical span at residues 219-239 (FLLASPLVGGIALLGGLLTMA). The Periplasmic portion of the chain corresponds to 240–256 (SAVRVLYPALADNWQMS). A helical transmembrane segment spans residues 257–277 (AAQIGFLYAAIPLGAAIGALT). Residues 278-287 (SGKLAHSARP) are Cytoplasmic-facing. A helical membrane pass occupies residues 288–307 (GLLMLLSTLGSFLAIGLFGL). Residues 308–313 (MPMWIL) lie on the Periplasmic side of the membrane. The chain crosses the membrane as a helical span at residues 314–336 (GVVCLALFGWLSAVSSLLQYTML). Over 337-356 (QTQTPEAMLGRINGLWTAQN) the chain is Cytoplasmic. The helical transmembrane segment at 357–377 (VTGDAIGAALLGGLGAMMTPV) threads the bilayer. Position 378 (A378) is a topological domain, periplasmic. The helical transmembrane segment at 379–399 (SASASGFGLLIIGVLLLLVLV) threads the bilayer. Residues 400 to 416 (ELRRFRQTPPQVTASDG) are Cytoplasmic-facing.

Belongs to the major facilitator superfamily. EntS (TC 2.A.1.38) family.

Its subcellular location is the cell inner membrane. Component of an export pathway for enterobactin. The polypeptide is Enterobactin exporter EntS (Escherichia coli O157:H7).